A 335-amino-acid polypeptide reads, in one-letter code: NmrA-like family domain-containing oxidoreductase hkm9 (335 aa).

NADP(+)-binding positions include 12-17, 38-42, 59-60, 80-82, Lys-137, and 161-164; these read GATGNQ, RNPNS, DG, INS, and YLEN.

This sequence belongs to the NmrA-type oxidoreductase family.

It participates in secondary metabolite biosynthesis. Functionally, nmrA-like family domain-containing oxidoreductase; part of the gene cluster that mediates the biosynthesis of hancockiamides, an unusual new family of N-cinnamoylated piperazines. The NRPS hkm10 and the NmrA-like reductase hkm9 are proposed to convert two molecules of L-Phe to the intermediary piperazine called xenocockiamide A. Xenocockiamide A is then converted to hancockiamide D via a series of hydroxylations and O-methylations. The tyrosinase hkm6 may catalyze an aromatic hydroxylation, then the 2-oxoglutarate-dependent Fe(II) dioxygenase hkm4 and the FAD-dependent phenol hydroxylase hkm7 may catalyze consecutive hydroxylations to install 2 more hydroxy groups, and the methyltransferase hkm8 probably catalyzes two methylations using 2 molecules of S-adenosyl-L-methionine (SAM). The NRPS hkm11 activates and transfers trans-cinnamate supplied by the PAL hkm12 to hancockiamide D and produces hancockiamide A. NRPS Hkm11 has the flexibility to tolerate the bulky hancockiamide G as a substrate and the absence of the acetyl-transferase hkm3 opens up the opportunity for hkm11 to introduce a second N-cinnamoyl moiety. The cytochrome P450 monooxygenase hkm5 catalyzes the methylenedioxy bridge formation, converting hancockiamide A into hancockiamide G. Hkm5 can also convert hancockiamide B into hancockiamide C, and hancockiamide D into hancockiamide H. The N-acetyltransferase hkm3 finally transfers an acetyl group to 1-N of piperazine, converting hancockiamide A into hancockiamide B and hancockiamide G into hancockiamide C. This is NmrA-like family domain-containing oxidoreductase hkm9 from Aspergillus hancockii.